Here is a 495-residue protein sequence, read N- to C-terminus: Probable aspartic-type endopeptidase OPSB (495 aa).

The first 19 residues, 1-19 (MRGDSFIWSLATAIPLLST), serve as a signal peptide directing secretion. The Peptidase A1 domain maps to 73-408 (YFCNLTLGTP…DLDNNEISIA (336 aa)). Asn-76 carries N-linked (GlcNAc...) asparagine glycosylation. Asp-91 is an active-site residue. A glycan (N-linked (GlcNAc...) asparagine) is linked at Asn-136. Asp-290 is a catalytic residue. The N-linked (GlcNAc...) asparagine glycan is linked to Asn-413. Positions 448–470 (TGLPGVETGVPGSRPPSSKAAGQ) are disordered. Ala-467 carries the GPI-anchor amidated alanine lipid modification. A propeptide spans 468 to 495 (AGQAKRPDFVLGVAAVGLAGAGMLFAAM) (removed in mature form).

Belongs to the peptidase A1 family.

Its subcellular location is the cell membrane. Probable GPI-anchored aspartic-type endopeptidase which contributes to virulence. In Trichophyton verrucosum (strain HKI 0517), this protein is Probable aspartic-type endopeptidase OPSB (OPSB).